The sequence spans 206 residues: MDYATRAAGGLVPVVIEQSARGERAFDIYSRLLKERVIFLVGQVEDYMANLVIAQLLFLESENPDKDIHLYINSPGGLVTAGLAIYDTMQFIKPDVSTLCVGQAASMGALLLAGGAAGKRYCLPHSRIMIHQPLGGFQGQASDIDIHAREILAVRDRLNKILAHHTGQPIEKIQIDTDRDNFMGGNDAVEYGLIDKVLVSRASGAA.

Catalysis depends on S106, which acts as the Nucleophile. H131 is an active-site residue.

This sequence belongs to the peptidase S14 family. Fourteen ClpP subunits assemble into 2 heptameric rings which stack back to back to give a disk-like structure with a central cavity, resembling the structure of eukaryotic proteasomes.

The protein localises to the cytoplasm. The enzyme catalyses Hydrolysis of proteins to small peptides in the presence of ATP and magnesium. alpha-casein is the usual test substrate. In the absence of ATP, only oligopeptides shorter than five residues are hydrolyzed (such as succinyl-Leu-Tyr-|-NHMec, and Leu-Tyr-Leu-|-Tyr-Trp, in which cleavage of the -Tyr-|-Leu- and -Tyr-|-Trp bonds also occurs).. Its function is as follows. Cleaves peptides in various proteins in a process that requires ATP hydrolysis. Has a chymotrypsin-like activity. Plays a major role in the degradation of misfolded proteins. The protein is ATP-dependent Clp protease proteolytic subunit 1 of Methylococcus capsulatus (strain ATCC 33009 / NCIMB 11132 / Bath).